The primary structure comprises 89 residues: Small ribosomal subunit protein uS15 (89 aa).

Belongs to the universal ribosomal protein uS15 family. In terms of assembly, part of the 30S ribosomal subunit. Forms a bridge to the 50S subunit in the 70S ribosome, contacting the 23S rRNA.

In terms of biological role, one of the primary rRNA binding proteins, it binds directly to 16S rRNA where it helps nucleate assembly of the platform of the 30S subunit by binding and bridging several RNA helices of the 16S rRNA. Forms an intersubunit bridge (bridge B4) with the 23S rRNA of the 50S subunit in the ribosome. This chain is Small ribosomal subunit protein uS15, found in Acholeplasma laidlawii (strain PG-8A).